A 212-amino-acid polypeptide reads, in one-letter code: Peroxiredoxin-like 2A (212 aa).

Residues Met3 to Val101 are thioredoxin fold. Residue Sec74 is a non-standard amino acid, selenocysteine. The active-site Redox-active is Cys77.

This sequence belongs to the peroxiredoxin-like PRXL2 family. PRXL2A subfamily. As to expression, expressed in kidney marrow.

The protein localises to the cytoplasm. Involved in redox regulation of the cell. Acts as an antioxidant. The protein is Peroxiredoxin-like 2A (prxl2a) of Danio rerio (Zebrafish).